We begin with the raw amino-acid sequence, 438 residues long: 23S rRNA (uracil(1939)-C(5))-methyltransferase RlmD (438 aa).

Positions 11–69 (LQPESKHQQVLVEKLDHQGAGIAYLNKKPLFIDGTLPGEEVVTQLTESKSKFARGKLIK) constitute a TRAM domain. 4 residues coordinate [4Fe-4S] cluster: C82, C88, C91, and C169. S-adenosyl-L-methionine is bound by residues Q272, F301, N306, E322, N349, and D370. C396 functions as the Nucleophile in the catalytic mechanism.

This sequence belongs to the class I-like SAM-binding methyltransferase superfamily. RNA M5U methyltransferase family. RlmD subfamily.

The catalysed reaction is uridine(1939) in 23S rRNA + S-adenosyl-L-methionine = 5-methyluridine(1939) in 23S rRNA + S-adenosyl-L-homocysteine + H(+). Its function is as follows. Catalyzes the formation of 5-methyl-uridine at position 1939 (m5U1939) in 23S rRNA. The chain is 23S rRNA (uracil(1939)-C(5))-methyltransferase RlmD from Vibrio vulnificus (strain CMCP6).